Reading from the N-terminus, the 227-residue chain is Cleavage and polyadenylation specificity factor subunit 5 (227 aa).

A Nudix hydrolase domain is found at methionine 76–leucine 201. The interaction with RNA stretch occupies residues threonine 102–phenylalanine 104. The short motif at glycine 109–glycine 130 is the Nudix box element.

This sequence belongs to the Nudix hydrolase family. CPSF5 subfamily. As to quaternary structure, homodimer (via N- and C-terminus); binds RNA as homodimer. Component of the cleavage factor Im (CFIm) complex.

Its subcellular location is the nucleus. It is found in the cytoplasm. Functionally, component of the cleavage factor Im (CFIm) complex that functions as an activator of the pre-mRNA 3'-end cleavage and polyadenylation processing required for the maturation of pre-mRNA into functional mRNAs. CFIm contributes to the recruitment of multiprotein complexes on specific sequences on the pre-mRNA 3'-end, so called cleavage and polyadenylation signals (pA signals). Most pre-mRNAs contain multiple pA signals, resulting in alternative cleavage and polyadenylation (APA) producing mRNAs with variable 3'-end formation. The CFIm complex acts as a key regulator of cleavage and polyadenylation site choice during APA through its binding to 5'-UGUA-3' elements localized in the 3'-untranslated region (UTR) for a huge number of pre-mRNAs. Binds to 5'-UGUA-3' elements localized upstream of pA signals that act as enhancers of pre-mRNA 3'-end processing. The homodimer mediates simultaneous sequence-specific recognition of two 5'-UGUA-3' elements within the pre-mRNA. Plays a role in somatic cell fate transitions and pluripotency by regulating widespread changes in gene expression through an APA-dependent function. Binds to chromatin. Binds to, but does not hydrolyze mono- and di-adenosine nucleotides. The protein is Cleavage and polyadenylation specificity factor subunit 5 of Xenopus laevis (African clawed frog).